The sequence spans 82 residues: Exodeoxyribonuclease 7 small subunit (82 aa).

This sequence belongs to the XseB family. As to quaternary structure, heterooligomer composed of large and small subunits.

It is found in the cytoplasm. The enzyme catalyses Exonucleolytic cleavage in either 5'- to 3'- or 3'- to 5'-direction to yield nucleoside 5'-phosphates.. Bidirectionally degrades single-stranded DNA into large acid-insoluble oligonucleotides, which are then degraded further into small acid-soluble oligonucleotides. This is Exodeoxyribonuclease 7 small subunit from Pectobacterium carotovorum subsp. carotovorum (strain PC1).